We begin with the raw amino-acid sequence, 175 residues long: Bifunctional protein PyrR (175 aa).

A PRPP-binding motif is present at residues 97 to 109; sequence IVLIDDVLFTGRT.

It belongs to the purine/pyrimidine phosphoribosyltransferase family. PyrR subfamily. As to quaternary structure, homodimer and homohexamer; in equilibrium.

It catalyses the reaction UMP + diphosphate = 5-phospho-alpha-D-ribose 1-diphosphate + uracil. Regulates transcriptional attenuation of the pyrimidine nucleotide (pyr) operon by binding in a uridine-dependent manner to specific sites on pyr mRNA. This disrupts an antiterminator hairpin in the RNA and favors formation of a downstream transcription terminator, leading to a reduced expression of downstream genes. Its function is as follows. Also displays a weak uracil phosphoribosyltransferase activity which is not physiologically significant. The chain is Bifunctional protein PyrR from Leuconostoc citreum (strain KM20).